Here is a 578-residue protein sequence, read N- to C-terminus: Glutathione hydrolase 2 (578 aa).

Positions 1-26 (MNSFMSLVRTATIALLLIAFLQNANA) are cleaved as a signal peptide. An N-linked (GlcNAc...) asparagine glycan is attached at asparagine 94. Position 103 (arginine 103) interacts with L-glutamate. 2 N-linked (GlcNAc...) asparagine glycosylation sites follow: asparagine 176 and asparagine 227. Residue threonine 374 is the Nucleophile of the active site. L-glutamate is bound by residues threonine 392, asparagine 394, glutamate 413, aspartate 416, 446 to 447 (SS), and 467 to 468 (GG). Asparagine 511 carries an N-linked (GlcNAc...) asparagine glycan.

It belongs to the gamma-glutamyltransferase family. As to expression, expressed in roots, immature trichomes and pollen. In developing siliques, specifically expressed in the embryo, endosperm, outer integument and a small portion of the funiculus.

It localises to the secreted. The protein localises to the extracellular space. Its subcellular location is the apoplast. The catalysed reaction is an N-terminal (5-L-glutamyl)-[peptide] + an alpha-amino acid = 5-L-glutamyl amino acid + an N-terminal L-alpha-aminoacyl-[peptide]. It carries out the reaction glutathione + H2O = L-cysteinylglycine + L-glutamate. It catalyses the reaction an S-substituted glutathione + H2O = an S-substituted L-cysteinylglycine + L-glutamate. Its pathway is sulfur metabolism; glutathione metabolism. In terms of biological role, may be required for glutathione transport into developing seeds. This Arabidopsis thaliana (Mouse-ear cress) protein is Glutathione hydrolase 2 (GGT2).